Consider the following 507-residue polypeptide: Myocyte-specific enhancer factor 2D (507 aa).

An MADS-box domain is found at 3–57; the sequence is RKKIQIQRITDERNRQVTFTKRKFGLMKKAYELSVLCDCEIALIIFNHSNKLFQY. A DNA-binding region (mef2-type) is located at residues 58–86; it reads ASTDMDKVLLKYTEYNEPHESRTNADIIE. Phosphoserine is present on residues S98, S106, S110, S121, and S180. A disordered region spans residues 174 to 207; that stretch reads TDPRLLSPQQPALQRNSVSPGLPQRPASAGAMLG. Over residues 180–192 the composition is skewed to polar residues; it reads SPQQPALQRNSVS. S190 carries the post-translational modification Phosphoserine; by PKA. S231 is modified (phosphoserine). Disordered stretches follow at residues 244 to 267, 357 to 392, and 423 to 507; these read NKVIPAKSPPPPTHNTQLGAPSRK, WQQPQQPQQPQPPQPPQSQPQPPQPQPQQPPQQQPH, and SIKS…WTLK. Position 245 is an N6-acetyllysine (K245). Phosphoserine is present on S251. The span at 363–389 shows a compositional bias: pro residues; the sequence is PQQPQPPQPPQSQPQPPQPQPQQPPQQ. K425 bears the N6-acetyllysine; alternate mark. K425 is covalently cross-linked (Glycyl lysine isopeptide (Lys-Gly) (interchain with G-Cter in SUMO); alternate). S430 is modified (phosphoserine).

As to quaternary structure, forms a complex with class II HDACs in undifferentiating cells. On myogenic differentiation, HDACs are released into the cytoplasm allowing MEF2s to interact with other proteins for activation. Interacts with HDAC4 (in undifferentiating cells); the interaction translocates MEF2D to nuclear dots. Forms a heterodimer with MEF2A. Interacts with MAPK7; the interaction phosphorylates but does not activate MEF2D. Interacts with MYOG. Interacts with CCAR2 and HDAC3. Post-translationally, phosphorylated on Ser-430 by CDK5 is required for Lys-425 sumoylation and inhibits transcriptional activity. In neurons, enhanced CDK5 activity induced by neurotoxins promotes caspase 3-mediated cleavage leading to neuron apoptosis. Phosphorylation on Ser-180 can be enhanced by EGF. Phosphorylated and activated by CaMK4. In terms of processing, acetylated on Lys-425 by CREBBP. Acetylated by EP300. Deacetylated by SIRT1 and HDAC3. Sumoylated on Lys-425 with SUMO2 but not SUMO1; which inhibits transcriptional activity and myogenic activity. Desumoylated by SENP3.

The protein resides in the nucleus. Functionally, transcriptional activator which binds specifically to the MEF2 element, 5'-YTA[AT](4)TAR-3', found in numerous muscle-specific, growth factor- and stress-induced genes. Mediates cellular functions not only in skeletal and cardiac muscle development, but also in neuronal differentiation and survival. Plays diverse roles in the control of cell growth, survival and apoptosis via p38 MAPK signaling in muscle-specific and/or growth factor-related transcription. Plays a critical role in the regulation of neuronal apoptosis. This is Myocyte-specific enhancer factor 2D (Mef2d) from Rattus norvegicus (Rat).